Consider the following 444-residue polypeptide: GTPase Der (444 aa).

EngA-type G domains follow at residues 3-167 and 180-353; these read PIVA…PEAE and LRLA…AECQ. GTP contacts are provided by residues 9 to 16, 56 to 60, 119 to 122, 186 to 193, 233 to 237, and 298 to 301; these read GRPNVGKS, DTGGM, NKVD, GRPNAGKS, DTAGV, and NKTD. The KH-like domain occupies 354-438; that stretch reads IRIGTGELNR…PVKVVCRASH (85 aa).

This sequence belongs to the TRAFAC class TrmE-Era-EngA-EngB-Septin-like GTPase superfamily. EngA (Der) GTPase family. In terms of assembly, associates with the 50S ribosomal subunit.

Its function is as follows. GTPase that plays an essential role in the late steps of ribosome biogenesis. The chain is GTPase Der from Solidesulfovibrio magneticus (strain ATCC 700980 / DSM 13731 / RS-1) (Desulfovibrio magneticus).